Consider the following 419-residue polypeptide: Histidine--tRNA ligase (419 aa).

This sequence belongs to the class-II aminoacyl-tRNA synthetase family. As to quaternary structure, homodimer.

The protein resides in the cytoplasm. It carries out the reaction tRNA(His) + L-histidine + ATP = L-histidyl-tRNA(His) + AMP + diphosphate + H(+). This is Histidine--tRNA ligase from Caldicellulosiruptor saccharolyticus (strain ATCC 43494 / DSM 8903 / Tp8T 6331).